The primary structure comprises 479 residues: Endoglucanase 20 (479 aa).

Positions Met-1 to Ala-21 are cleaved as a signal peptide. A glycan (N-linked (GlcNAc...) asparagine) is linked at Asn-29. The Nucleophile role is filled by Asp-76. His-398 is a catalytic residue. Residue Asn-442 is glycosylated (N-linked (GlcNAc...) asparagine). Active-site residues include Asp-449 and Glu-458.

This sequence belongs to the glycosyl hydrolase 9 (cellulase E) family.

The protein localises to the secreted. It carries out the reaction Endohydrolysis of (1-&gt;4)-beta-D-glucosidic linkages in cellulose, lichenin and cereal beta-D-glucans.. The sequence is that of Endoglucanase 20 from Arabidopsis thaliana (Mouse-ear cress).